The sequence spans 599 residues: Adenine deaminase (599 aa).

This sequence belongs to the metallo-dependent hydrolases superfamily. Adenine deaminase family. Requires Mn(2+) as cofactor.

The enzyme catalyses adenine + H2O + H(+) = hypoxanthine + NH4(+). This is Adenine deaminase from Clostridium botulinum (strain ATCC 19397 / Type A).